A 349-amino-acid chain; its full sequence is DENN domain-containing protein 10 (349 aa).

The uDENN domain maps to 1–135 (MATPELMLSL…TKGICQSDEN (135 aa)). In terms of domain architecture, cDENN spans 160–294 (QFGMETIILY…ADRSDAQVIK (135 aa)). The 54-residue stretch at 296-349 (ISVKTKEILSNLMSLADHADNSKLTLECLKQGHYPPATENFLFHLAAAEQLLKI) folds into the dDENN domain.

The protein belongs to the DENND10 family.

The protein resides in the late endosome. Its function is as follows. Guanine nucleotide exchange factor (GEF) which may be involved in the regulation of late endocytic pathway homeostasis, including endosomal positioning, maturation and secretion. The chain is DENN domain-containing protein 10 (dennd10) from Danio rerio (Zebrafish).